Here is a 56-residue protein sequence, read N- to C-terminus: Large ribosomal subunit protein bL33 (56 aa).

It belongs to the bacterial ribosomal protein bL33 family.

The polypeptide is Large ribosomal subunit protein bL33 (Glaesserella parasuis serovar 5 (strain SH0165) (Haemophilus parasuis)).